Reading from the N-terminus, the 219-residue chain is MAELYVKPGNKERGWNDPPQFSYGLQTQTGGTKRTPLTKRVAAPQDGSPRAPETSGPPPVDHPPPSSKASRPPPMGSCPASGVDPPSSPVIESETLIEDVLRPLEQALEDCRGHTKQVCDDISRRLALLHEQWDGGKLSVPVKKRMALLVQELLHHQWDTADDIHRSLMVDHVTEVSQWMVGVKRLIAEKRSLSSEENKEEKSTVAPENQTIPGFQPSS.

2 disordered regions span residues 1–90 and 192–219; these read MAEL…SSPV and SLSSEENKEEKSTVAPENQTIPGFQPSS. Over residues 23-32 the composition is skewed to polar residues; that stretch reads YGLQTQTGGT. A Phosphoserine modification is found at serine 48. Pro residues predominate over residues 55–76; it reads SGPPPVDHPPPSSKASRPPPMG. Positions 192–203 are enriched in basic and acidic residues; that stretch reads SLSSEENKEEKS. Positions 206-219 are enriched in polar residues; that stretch reads APENQTIPGFQPSS.

It belongs to the SRA1 family. SRA1 RNA exists in a ribonucleoprotein complex containing NCOA1. The RNA also forms a complex with PUS1 and RARG in the nucleus. Interacts with AR. In terms of tissue distribution, expressed in various prostate cancer cell lines.

Its subcellular location is the nucleus. The protein localises to the cytoplasm. Functionally, functional RNA which acts as a transcriptional coactivator that selectively enhances steroid receptor-mediated transactivation ligand-independently through a mechanism involving the modulating N-terminal domain (AF-1) of steroid receptors. Also mediates transcriptional coactivation of steroid receptors ligand-dependently through the steroid-binding domain (AF-2). Enhances cellular proliferation and differentiation and promotes apoptosis in vivo. May play a role in tumorigenesis. The sequence is that of Steroid receptor RNA activator 1 from Rattus norvegicus (Rat).